We begin with the raw amino-acid sequence, 398 residues long: Acetate kinase (398 aa).

Position 9 (asparagine 9) interacts with Mg(2+). Lysine 16 provides a ligand contact to ATP. Arginine 93 is a binding site for substrate. Residue aspartate 150 is the Proton donor/acceptor of the active site. ATP-binding positions include 209-213, 284-286, and 329-333; these read HLGAG, DMR, and GIGEH. Glutamate 382 lines the Mg(2+) pocket.

Belongs to the acetokinase family. In terms of assembly, homodimer. Mg(2+) serves as cofactor. Requires Mn(2+) as cofactor.

It localises to the cytoplasm. The enzyme catalyses acetate + ATP = acetyl phosphate + ADP. Its pathway is metabolic intermediate biosynthesis; acetyl-CoA biosynthesis; acetyl-CoA from acetate: step 1/2. Catalyzes the formation of acetyl phosphate from acetate and ATP. Can also catalyze the reverse reaction. The polypeptide is Acetate kinase (Rhodopseudomonas palustris (strain TIE-1)).